A 185-amino-acid polypeptide reads, in one-letter code: Translation initiation factor IF-3 (185 aa).

It belongs to the IF-3 family. Monomer.

The protein localises to the cytoplasm. In terms of biological role, IF-3 binds to the 30S ribosomal subunit and shifts the equilibrium between 70S ribosomes and their 50S and 30S subunits in favor of the free subunits, thus enhancing the availability of 30S subunits on which protein synthesis initiation begins. The sequence is that of Translation initiation factor IF-3 from Rickettsia felis (strain ATCC VR-1525 / URRWXCal2) (Rickettsia azadi).